A 349-amino-acid polypeptide reads, in one-letter code: N-lysine methyltransferase KMT5A (349 aa).

Residues 18 to 46 (AAVAATAPGPEMVEQRGPGRPRSDGENVF) form a disordered region. Phosphoserine is present on S57. Residues 65-207 (RSPLQEENSV…SEERKKNELI (143 aa)) form a disordered region. The span at 107–119 (VKSDEQKSKDTRR) shows a compositional bias: basic and acidic residues. The residue at position 138 (T138) is a Phosphothreonine. The segment covering 154–170 (ALKKSLKGKQAPRKKSQ) has biased composition (basic residues). The span at 192–207 (SKAELQSEERKKNELI) shows a compositional bias: basic and acidic residues. Positions 213–334 (EGMKIDLIDG…AGEELLYDYG (122 aa)) constitute an SET domain. S-adenosyl-L-methionine contacts are provided by residues 223–225 (KGR), Y268, and 295–296 (NH).

Belongs to the class V-like SAM-binding methyltransferase superfamily. Histone-lysine methyltransferase family. PR/SET subfamily. Interacts with L3MBTL1. Interacts with SIRT2 (phosphorylated form); the interaction is direct, stimulates KMT5A-mediated methyltransferase activity at histone H4 'Lys-20' (H4K20me1) and is increased in a H(2)O(2)-induced oxidative stress-dependent manner. In terms of processing, ubiquitinated and degraded by the DCX(DTL) complex.

The protein localises to the nucleus. It is found in the chromosome. The catalysed reaction is L-lysyl(20)-[histone H4] + S-adenosyl-L-methionine = N(6)-methyl-L-lysyl(20)-[histone H4] + S-adenosyl-L-homocysteine + H(+). The enzyme catalyses L-lysyl-[protein] + S-adenosyl-L-methionine = N(6)-methyl-L-lysyl-[protein] + S-adenosyl-L-homocysteine + H(+). Protein-lysine N-methyltransferase that monomethylates both histones and non-histone proteins. Specifically monomethylates 'Lys-20' of histone H4 (H4K20me1). H4K20me1 is enriched during mitosis and represents a specific tag for epigenetic transcriptional repression. Mainly functions in euchromatin regions, thereby playing a central role in the silencing of euchromatic genes. Required for cell proliferation, probably by contributing to the maintenance of proper higher-order structure of DNA during mitosis. Involved in chromosome condensation and proper cytokinesis. Nucleosomes are preferred as substrate compared to free histones. Mediates monomethylation of p53/TP53 at 'Lys-382', leading to repress p53/TP53-target genes. Plays a negative role in TGF-beta response regulation and a positive role in cell migration. In Mus musculus (Mouse), this protein is N-lysine methyltransferase KMT5A.